Consider the following 129-residue polypeptide: Glycine cleavage system H protein (129 aa).

In terms of domain architecture, Lipoyl-binding spans 24–106 (SYTVGISEHA…FGDGWFFRVM (83 aa)). Lys-65 is subject to N6-lipoyllysine.

It belongs to the GcvH family. The glycine cleavage system is composed of four proteins: P, T, L and H. It depends on (R)-lipoate as a cofactor.

Its function is as follows. The glycine cleavage system catalyzes the degradation of glycine. The H protein shuttles the methylamine group of glycine from the P protein to the T protein. The polypeptide is Glycine cleavage system H protein (Shewanella woodyi (strain ATCC 51908 / MS32)).